A 1015-amino-acid polypeptide reads, in one-letter code: Fibronectin-binding protein A (1015 aa).

A signal peptide spans 1–36 (MKNNLRYGIRKHKLGAASVFLGTMIVVGMGQDKEAA). Positions 7 to 18 (YGIRKHKLGAAS) match the YSIRK-G/S signaling motif motif. Positions 37–512 (ASEQKTTTVE…SNKADGNGKN (476 aa)) are ligand-binding A region. Polar residues predominate over residues 75 to 92 (SYSATATEQPSNATQVTT). The segment at 75–199 (SYSATATEQP…KVETGTDVTS (125 aa)) is disordered. Residues 112 to 126 (TVKEEVVKEEAKPQV) show a composition bias toward basic and acidic residues. The span at 129-139 (TTQSQDNSGDQ) shows a compositional bias: polar residues. The segment covering 179–193 (DVVEAKEASDEKVET) has biased composition (basic and acidic residues). The tract at residues 194–512 (GTDVTSKVTV…SNKADGNGKN (319 aa)) is fibrinogen/elastin/tropoelastin-binding. The fibronectin-binding stretch occupies residues 513–873 (GQIIQNNDFE…EGQQTIEEDT (361 aa)). One copy of the B-1 repeat lies at 546–575 (ENQDNTPLDIDYHTAIDGEGGYVDGYIETI). The tract at residues 546-605 (ENQDNTPLDIDYHTAIDGEGGYVDGYIETIEETDSSAIDIDYHTAVDSEAGHVGGYTESS) is 2 X approximate tandem repeats. Residues 576–605 (EETDSSAIDIDYHTAVDSEAGHVGGYTESS) form a B-2 repeat. 4 disordered regions span residues 596–623 (GHVG…NSKH), 741–815 (LGYE…IDFD), 828–953 (EIIE…GKVV), and 966–992 (VAPT…NKGM). The D-1 repeat unit spans residues 746–783 (GQNSGNQSFEEDTEEDKPKYEQGGNIVDIDFDSVPQIQ). The segment at 746–875 (GQNSGNQSFE…QQTIEEDTTP (130 aa)) is 4 X approximate tandem repeats. The span at 780 to 791 (PQIQGQNNGNQS) shows a compositional bias: polar residues. A D-2 repeat occupies 784–821 (GQNNGNQSFEEDTEKDKPKYEQGGNIIDIDFDSVPQIH). The stretch at 822-860 (GFNKHTEIIEEDTNKDKPNYQFGGHNSVDFEEDTLPKVS) is one D-3 repeat. Basic and acidic residues predominate over residues 828–839 (EIIEEDTNKDKP). The stretch at 861–875 (GQNEGQQTIEEDTTP) is one D-4; truncated repeat. Residues 875-935 (PPTPPTPEVP…PAEPGKPVPP (61 aa)) are compositionally biased toward pro residues. WR repeat units lie at residues 876–889 (PTPP…EPET), 890–903 (PTPP…EPET), 904–917 (PTPP…EPET), 918–931 (PTPP…EPGK), and 932–945 (PVPP…KPSK). Residues 876 to 945 (PTPPTPEVPS…AKEEPKKPSK (70 aa)) form a 5 X tandem repeats, Pro-rich (WR) region. Positions 979–983 (LPETG) match the LPXTG sorting signal motif. At T982 the chain carries Pentaglycyl murein peptidoglycan amidated threonine. Residues 983–1015 (GGEESTNKGMLFGGLFSILGLALLRRNKKNNKA) constitute a propeptide, removed by sortase.

Its subcellular location is the secreted. The protein resides in the cell wall. Promotes bacterial attachment to multiple substrates, such as fibronectin (Fn), fibrinogen (Fg), elastin peptides and tropoelastin. This confers to S.aureus the ability to invade endothelial cells. Promotes adherence to and aggregation of activated platelets. The chain is Fibronectin-binding protein A (fnbA) from Staphylococcus aureus (strain MSSA476).